We begin with the raw amino-acid sequence, 398 residues long: MLNSLDLEGRPQDTRVVVAMSGGVDSSATAALLKSQGYDVVGITLQLYDHGAATHRKGACCAGQDIHDARAVAERIGIPHYVLDYESRFRESVIDSFADSYALGETPVPCIECNRSVKFRDLLATARELGASALATGHYVSSRRLDDGSRALICAADRDRDQSYFLFATTREQLDFLRFPLGDMTKPQTRELARQFGLSVADKHDSQDICFVPTGRYTDVVERLKPNAMEPGEIVDLNGHVLGSHPGIVHFTVGQRRGLGIASRAPLYVLRLDAAHRRVVVGPREALRMERIVLRDVNWIGDGAIDQAVGDGLELFVRVRSTRAPQPAWLRAVGGGYEVELVAGEEGVSPGQACVFYDAADGQARVLGGGFIKSAAPRWSADGVRDDAASPALAAMRG.

ATP contacts are provided by residues 19 to 26 and Leu45; that span reads AMSGGVDS. Cys113 acts as the Nucleophile in catalysis. An intrachain disulfide couples Cys113 to Cys210. An ATP-binding site is contributed by Gly137. The interval 160–162 is interaction with tRNA; that stretch reads RDQ. Catalysis depends on Cys210, which acts as the Cysteine persulfide intermediate.

The protein belongs to the MnmA/TRMU family.

It is found in the cytoplasm. The enzyme catalyses S-sulfanyl-L-cysteinyl-[protein] + uridine(34) in tRNA + AH2 + ATP = 2-thiouridine(34) in tRNA + L-cysteinyl-[protein] + A + AMP + diphosphate + H(+). Catalyzes the 2-thiolation of uridine at the wobble position (U34) of tRNA, leading to the formation of s(2)U34. The protein is tRNA-specific 2-thiouridylase MnmA of Rhodopseudomonas palustris (strain BisB5).